A 354-amino-acid polypeptide reads, in one-letter code: MKATLVLFLLAQVSWAGPFEQRGLFDFMLEDEASGIIPYDPDNPLISMCPYRCQCHLRVVQCSDLGLDKVPWEFPPDTTLLDLQNNKITEIKEGAFKNLKDLHTLILVNNKISKISPEAFKPLVKLERLYLSKNHLKELPEKLPKTLQELRLHDNEITKLKKSVFNGLNRMIVIELGGNPLKNSGIENGALQGMKGLGYIRISDTNITAIPQGLPTSISELHLDGNKIAKVDAASLKGMSNLSKLGLSFNSITVVENGSLANVPHLRELHLDNNKLLRVPAGLAQHKYVQVVYLHNNNISEVGQHDFCLPSYQTRKTSYTAVSLYSNPVRYWQIHPHTFRCVFGRSTIQLGNYK.

Residues 1–16 (MKATLVLFLLAQVSWA) form the signal peptide. Residues 17-30 (GPFEQRGLFDFMLE) constitute a propeptide that is removed on maturation. S34 is a glycosylation site (O-linked (Xyl...) (glycosaminoglycan) serine). 2 cysteine pairs are disulfide-bonded: C49/C55 and C53/C62. 12 LRR repeats span residues 68–88 (DKVP…NNKI), 89–112 (TEIK…NNKI), 113–136 (SKIS…KNHL), 137–157 (KELP…DNEI), 158–181 (TKLK…GNPL), 182–207 (KNSG…DTNI), 208–228 (TAIP…GNKI), 229–252 (AKVD…FNSI), 253–276 (TVVE…NNKL), 277–299 (LRVP…NNNI), 300–329 (SEVG…SNPV), and 330–354 (RYWQ…GNYK). N206 carries N-linked (GlcNAc...) asparagine glycosylation. N241, N257, and N298 each carry an N-linked (GlcNAc...) asparagine glycan. A disulfide bridge links C308 with C341.

It belongs to the small leucine-rich proteoglycan (SLRP) family. SLRP class I subfamily. In terms of assembly, binds to type I and type II collagen, fibronectin and TGF-beta. Forms a ternary complex with MFAP2 and ELN. Interacts with DPT. The attached glycosaminoglycan chain can be either chondroitin sulfate or dermatan sulfate depending upon the tissue of origin.

It localises to the secreted. It is found in the extracellular space. The protein localises to the extracellular matrix. Its function is as follows. May affect the rate of fibrils formation. May be implicated in the dilatation of the rat cervix. The polypeptide is Decorin (Dcn) (Rattus norvegicus (Rat)).